The primary structure comprises 401 residues: Adaptive-response sensory kinase SasA (401 aa).

A Histidine kinase domain is found at 175–400; it reads MLVHDLRNPL…WFHFTLPVYP (226 aa). A Phosphohistidine; by autocatalysis modification is found at His178.

Homooligomerizes. Interacts with KaiC. Participates in the KaiABC clock complex, whose core is composed of a KaiC homohexamer, 6 KaiB and up to 6 KaiA dimers. SasA and KaiB(fs) compete to bind to KaiC.

The catalysed reaction is ATP + protein L-histidine = ADP + protein N-phospho-L-histidine.. Functionally, member of the two-component regulatory system SasA/RpaA involved in genome-wide circadian gene expression. One of several clock output pathways. Participates in the Kai clock protein complex, the main circadian regulator in cyanobacteria, via its interaction with KaiC. KaiC enhances the autophosphorylation activity of SasA, which then transfers its phosphate group to RpaA to activate it. In addition to its output function, recruits fold-shifted KaiB (KaiB(fs)) to KaiC to cooperatively form the KaiB(6):KaiC(6) complex (independent of SasA kinase activity). Required for robustness of the circadian rhythm of gene expression and is involved in clock output, also required for adaptation to light/dark cycles. The protein is Adaptive-response sensory kinase SasA of Trichormus variabilis (strain ATCC 29413 / PCC 7937) (Anabaena variabilis).